A 115-amino-acid chain; its full sequence is Prefoldin subunit beta (115 aa).

The protein belongs to the prefoldin subunit beta family. Heterohexamer of two alpha and four beta subunits.

It is found in the cytoplasm. In terms of biological role, molecular chaperone capable of stabilizing a range of proteins. Seems to fulfill an ATP-independent, HSP70-like function in archaeal de novo protein folding. In Methanococcus aeolicus (strain ATCC BAA-1280 / DSM 17508 / OCM 812 / Nankai-3), this protein is Prefoldin subunit beta.